The sequence spans 286 residues: Ribosomal RNA small subunit methyltransferase A (286 aa).

Residues asparagine 28, leucine 30, glycine 55, glutamate 77, aspartate 103, and asparagine 123 each contribute to the S-adenosyl-L-methionine site.

This sequence belongs to the class I-like SAM-binding methyltransferase superfamily. rRNA adenine N(6)-methyltransferase family. RsmA subfamily.

The protein resides in the cytoplasm. The catalysed reaction is adenosine(1518)/adenosine(1519) in 16S rRNA + 4 S-adenosyl-L-methionine = N(6)-dimethyladenosine(1518)/N(6)-dimethyladenosine(1519) in 16S rRNA + 4 S-adenosyl-L-homocysteine + 4 H(+). In terms of biological role, specifically dimethylates two adjacent adenosines (A1518 and A1519) in the loop of a conserved hairpin near the 3'-end of 16S rRNA in the 30S particle. May play a critical role in biogenesis of 30S subunits. The polypeptide is Ribosomal RNA small subunit methyltransferase A (Rhodopseudomonas palustris (strain BisB18)).